We begin with the raw amino-acid sequence, 293 residues long: Biphenyl-2,3-diol 1,2-dioxygenase (293 aa).

VOC domains lie at 5–119 and 143–265; these read RLGY…IYYG and GIGH…FGWG. Fe cation is bound by residues His146, His210, and Glu261.

Belongs to the extradiol ring-cleavage dioxygenase family. In terms of assembly, homooctamer. The cofactor is Fe(2+).

It catalyses the reaction biphenyl-2,3-diol + O2 = 2-hydroxy-6-oxo-6-phenylhexa-2,4-dienoate + H(+). It participates in xenobiotic degradation; biphenyl degradation; 2-hydroxy-2,4-pentadienoate and benzoate from biphenyl: step 3/4. The chain is Biphenyl-2,3-diol 1,2-dioxygenase (bphC) from Pseudomonas sp. (strain KKS102).